We begin with the raw amino-acid sequence, 212 residues long: Dephospho-CoA kinase (212 aa).

Positions 6–211 constitute a DPCK domain; that stretch reads RLGLTGGIGS…LSCQPLSPNQ (206 aa). 14 to 19 is a binding site for ATP; it reads GSGKST.

The protein belongs to the CoaE family.

It localises to the cytoplasm. It catalyses the reaction 3'-dephospho-CoA + ATP = ADP + CoA + H(+). It functions in the pathway cofactor biosynthesis; coenzyme A biosynthesis; CoA from (R)-pantothenate: step 5/5. Functionally, catalyzes the phosphorylation of the 3'-hydroxyl group of dephosphocoenzyme A to form coenzyme A. The chain is Dephospho-CoA kinase from Albidiferax ferrireducens (strain ATCC BAA-621 / DSM 15236 / T118) (Rhodoferax ferrireducens).